The primary structure comprises 251 residues: 3-dehydroquinate dehydratase (251 aa).

Residues 47–49 (EWR) and Arg-83 each bind 3-dehydroquinate. Residue His-144 is the Proton donor/acceptor of the active site. Lys-171 acts as the Schiff-base intermediate with substrate in catalysis. Positions 214, 233, and 237 each coordinate 3-dehydroquinate.

It belongs to the type-I 3-dehydroquinase family. Homodimer.

It carries out the reaction 3-dehydroquinate = 3-dehydroshikimate + H2O. Its pathway is metabolic intermediate biosynthesis; chorismate biosynthesis; chorismate from D-erythrose 4-phosphate and phosphoenolpyruvate: step 3/7. Involved in the third step of the chorismate pathway, which leads to the biosynthesis of aromatic amino acids. Catalyzes the cis-dehydration of 3-dehydroquinate (DHQ) and introduces the first double bond of the aromatic ring to yield 3-dehydroshikimate. The chain is 3-dehydroquinate dehydratase from Klebsiella pneumoniae (strain 342).